A 695-amino-acid chain; its full sequence is Serotransferrin (695 aa).

An N-terminal signal peptide occupies residues 1–19 (MRLAAGALLACAALGLCLA). Transferrin-like domains follow at residues 25–347 (VRWC…NLRE) and 361–680 (VKWC…NLRK). 2 disulfide bridges follow: Cys28/Cys67 and Cys38/Cys58. Arg42 bears the Dimethylated arginine mark. Fe(3+) is bound by residues Asp82 and Tyr114. 17 disulfide bridges follow: Cys137-Cys213, Cys156-Cys350, Cys177-Cys193, Cys180-Cys196, Cys190-Cys198, Cys246-Cys260, Cys358-Cys612, Cys364-Cys396, Cys374-Cys387, Cys421-Cys690, Cys436-Cys653, Cys468-Cys539, Cys492-Cys681, Cys502-Cys516, Cys513-Cys522, Cys579-Cys593, and Cys631-Cys636. Hydrogencarbonate is bound by residues Thr139, Arg143, Ala145, and Gly146. Tyr207 provides a ligand contact to Fe(3+). His268 provides a ligand contact to Fe(3+). Position 389 is a phosphoserine (Ser389). 2 residues coordinate Fe(3+): Asp411 and Tyr444. Hydrogencarbonate is bound by residues Thr470, Arg474, Ala476, and Gly477. A glycan (N-linked (GlcNAc...) asparagine) is linked at Asn509. Tyr533 is a Fe(3+) binding site. His601 lines the Fe(3+) pocket. Ser682 bears the Phosphoserine mark.

Belongs to the transferrin family. As to quaternary structure, monomer. Part of a complex composed of SLC40A1/ferroportin, TF/transferrin and HEPH/hephaestin that transfers iron from cells to transferrin. Expressed by the liver and secreted in plasma.

It is found in the secreted. Transferrins are iron binding transport proteins which can bind two Fe(3+) ions in association with the binding of an anion, usually bicarbonate. It is responsible for the transport of iron from sites of absorption and heme degradation to those of storage and utilization. Serum transferrin may also have a further role in stimulating cell proliferation. The protein is Serotransferrin (TF) of Oryctolagus cuniculus (Rabbit).